A 387-amino-acid polypeptide reads, in one-letter code: 1-deoxy-D-xylulose 5-phosphate reductoisomerase (387 aa).

8 residues coordinate NADPH: T10, G11, S12, I13, G36, K37, N38, and N123. K124 contributes to the 1-deoxy-D-xylulose 5-phosphate binding site. E125 contacts NADPH. D149 is a Mn(2+) binding site. 1-deoxy-D-xylulose 5-phosphate contacts are provided by S150, E151, S175, and H198. E151 provides a ligand contact to Mn(2+). G204 serves as a coordination point for NADPH. Residues S211, N216, K217, and E220 each contribute to the 1-deoxy-D-xylulose 5-phosphate site. E220 lines the Mn(2+) pocket.

This sequence belongs to the DXR family. Requires Mg(2+) as cofactor. It depends on Mn(2+) as a cofactor.

It carries out the reaction 2-C-methyl-D-erythritol 4-phosphate + NADP(+) = 1-deoxy-D-xylulose 5-phosphate + NADPH + H(+). The protein operates within isoprenoid biosynthesis; isopentenyl diphosphate biosynthesis via DXP pathway; isopentenyl diphosphate from 1-deoxy-D-xylulose 5-phosphate: step 1/6. Its function is as follows. Catalyzes the NADPH-dependent rearrangement and reduction of 1-deoxy-D-xylulose-5-phosphate (DXP) to 2-C-methyl-D-erythritol 4-phosphate (MEP). This chain is 1-deoxy-D-xylulose 5-phosphate reductoisomerase, found in Pelotomaculum thermopropionicum (strain DSM 13744 / JCM 10971 / SI).